A 699-amino-acid chain; its full sequence is Elongation factor G (699 aa).

A tr-type G domain is found at 8–288 (EDYRNFGIMA…AVVDYLPSPL (281 aa)). GTP is bound by residues 17–24 (AHIDAGKT), 86–90 (DTPGH), and 140–143 (NKMD).

The protein belongs to the TRAFAC class translation factor GTPase superfamily. Classic translation factor GTPase family. EF-G/EF-2 subfamily.

Its subcellular location is the cytoplasm. In terms of biological role, catalyzes the GTP-dependent ribosomal translocation step during translation elongation. During this step, the ribosome changes from the pre-translocational (PRE) to the post-translocational (POST) state as the newly formed A-site-bound peptidyl-tRNA and P-site-bound deacylated tRNA move to the P and E sites, respectively. Catalyzes the coordinated movement of the two tRNA molecules, the mRNA and conformational changes in the ribosome. This is Elongation factor G from Rhizobium rhizogenes (strain K84 / ATCC BAA-868) (Agrobacterium radiobacter).